Here is a 110-residue protein sequence, read N- to C-terminus: U1-lycotoxin-Ls1ee (110 aa).

Residues M1–A20 form the signal peptide. Positions E21–R44 are excised as a propeptide. 4 cysteine pairs are disulfide-bonded: C47–C62, C54–C71, C61–C89, and C73–C87.

This sequence belongs to the neurotoxin 19 (CSTX) family. 03 subfamily. In terms of tissue distribution, expressed by the venom gland.

The protein resides in the secreted. This is U1-lycotoxin-Ls1ee from Lycosa singoriensis (Wolf spider).